The sequence spans 252 residues: Triosephosphate isomerase (252 aa).

A substrate-binding site is contributed by 10–12 (NWK). The Electrophile role is filled by His-96. Glu-168 (proton acceptor) is an active-site residue. Substrate is bound by residues Gly-174, Ser-213, and 234–235 (GG).

Belongs to the triosephosphate isomerase family. As to quaternary structure, homodimer.

The protein localises to the cytoplasm. The enzyme catalyses D-glyceraldehyde 3-phosphate = dihydroxyacetone phosphate. It functions in the pathway carbohydrate biosynthesis; gluconeogenesis. It participates in carbohydrate degradation; glycolysis; D-glyceraldehyde 3-phosphate from glycerone phosphate: step 1/1. Its function is as follows. Involved in the gluconeogenesis. Catalyzes stereospecifically the conversion of dihydroxyacetone phosphate (DHAP) to D-glyceraldehyde-3-phosphate (G3P). The polypeptide is Triosephosphate isomerase (Nitrosomonas europaea (strain ATCC 19718 / CIP 103999 / KCTC 2705 / NBRC 14298)).